Here is a 247-residue protein sequence, read N- to C-terminus: Reticulon-like protein B8 (247 aa).

The Reticulon domain maps to 61–247; it reads SADVLLWRNK…SGKFGLKKRE (187 aa). A run of 3 helical transmembrane segments spans residues 71-91, 92-112, and 166-186; these read KISA…EWIN, FHFL…QFVW, and FLMA…CNFL.

The protein resides in the endoplasmic reticulum membrane. In Arabidopsis thaliana (Mouse-ear cress), this protein is Reticulon-like protein B8 (RTNLB8).